We begin with the raw amino-acid sequence, 524 residues long: Cytochrome P450 monooxygenase patH (524 aa).

Residues 1 to 4 (MEPM) are Cytoplasmic-facing. The helical transmembrane segment at 5–23 (LLLILVAAVVLLFVRWAFV) threads the bilayer. Over 24–524 (YGHRTSNMPK…KEVFSQFTEG (501 aa)) the chain is Lumenal. Asparagine 191 carries N-linked (GlcNAc...) asparagine glycosylation. Cysteine 442 provides a ligand contact to heme. The N-linked (GlcNAc...) asparagine glycan is linked to asparagine 499.

Belongs to the cytochrome P450 family. Requires heme as cofactor.

It localises to the endoplasmic reticulum membrane. The catalysed reaction is 3-methylphenol + reduced [NADPH--hemoprotein reductase] + O2 = 3-hydroxybenzyl alcohol + oxidized [NADPH--hemoprotein reductase] + H2O + H(+). It participates in mycotoxin biosynthesis; patulin biosynthesis. Its function is as follows. Cytochrome P450 monooxygenase; part of the gene cluster that mediates the biosynthesis of patulin, an acetate-derived tetraketide mycotoxin produced by several fungal species that shows antimicrobial properties against several bacteria. PatH catalyzes the conversion of m-cresol into m-hydroxybenzyl alcohol. The pathway begins with the synthesis of 6-methylsalicylic acid by the polyketide synthase (PKS) patK via condensation of acetate and malonate units. The 6-methylsalicylic acid decarboxylase patG then catalyzes the decarboxylation of 6-methylsalicylic acid to yield m-cresol (also known as 3-methylphenol). These first reactions occur in the cytosol. The intermediate m-cresol is then transported into the endoplasmic reticulum where the cytochrome P450 monooxygenase patH converts it to m-hydroxybenzyl alcohol, which is further converted to gentisyl alcohol by the cytochrome P450 monooxygenase patI. The oxidoreductases patJ and patO further convert gentisyl alcohol to isoepoxydon in the vacuole. PatN catalyzes then the transformation of isoepoxydon into phyllostine. The cluster protein patF is responsible for the conversion from phyllostine to neopatulin whereas the alcohol dehydrogenase patD converts neopatulin to E-ascladiol. The steps between isoepoxydon and E-ascladiol occur in the cytosol, and E-ascladiol is probably secreted to the extracellular space by one of the cluster-specific transporters patC or patM. Finally, the secreted patulin synthase patE catalyzes the conversion of E-ascladiol to patulin. In Aspergillus clavatus (strain ATCC 1007 / CBS 513.65 / DSM 816 / NCTC 3887 / NRRL 1 / QM 1276 / 107), this protein is Cytochrome P450 monooxygenase patH.